A 284-amino-acid polypeptide reads, in one-letter code: Acetylglutamate kinase (284 aa).

Residues 66–67 (GG), R88, and N179 each bind substrate.

The protein belongs to the acetylglutamate kinase family. ArgB subfamily.

It is found in the cytoplasm. It catalyses the reaction N-acetyl-L-glutamate + ATP = N-acetyl-L-glutamyl 5-phosphate + ADP. The protein operates within amino-acid biosynthesis; L-arginine biosynthesis; N(2)-acetyl-L-ornithine from L-glutamate: step 2/4. Its function is as follows. Catalyzes the ATP-dependent phosphorylation of N-acetyl-L-glutamate. This chain is Acetylglutamate kinase, found in Actinobacillus pleuropneumoniae serotype 3 (strain JL03).